We begin with the raw amino-acid sequence, 230 residues long: Large ribosomal subunit protein uL3 (230 aa).

Disordered stretches follow at residues 125–149 (QAIGPRSHGGGGGSKPIRQTGSLGD) and 210–230 (PNPKNPVSLFVPNSDKEVKNE).

Belongs to the universal ribosomal protein uL3 family. In terms of assembly, part of the 50S ribosomal subunit. Forms a cluster with proteins L14 and L19.

One of the primary rRNA binding proteins, it binds directly near the 3'-end of the 23S rRNA, where it nucleates assembly of the 50S subunit. The chain is Large ribosomal subunit protein uL3 from Mesomycoplasma hyopneumoniae (strain 232) (Mycoplasma hyopneumoniae).